The primary structure comprises 251 residues: Octanoyltransferase (251 aa).

Residues 49–230 (DEIADQILVL…DLDDAFAGRL (182 aa)) form the BPL/LPL catalytic domain. Residues 87 to 94 (RGGRITWH), 160 to 162 (ALG), and 173 to 175 (GLA) each bind substrate. The active-site Acyl-thioester intermediate is Cys191.

The protein belongs to the LipB family.

It localises to the cytoplasm. It catalyses the reaction octanoyl-[ACP] + L-lysyl-[protein] = N(6)-octanoyl-L-lysyl-[protein] + holo-[ACP] + H(+). Its pathway is protein modification; protein lipoylation via endogenous pathway; protein N(6)-(lipoyl)lysine from octanoyl-[acyl-carrier-protein]: step 1/2. Functionally, catalyzes the transfer of endogenously produced octanoic acid from octanoyl-acyl-carrier-protein onto the lipoyl domains of lipoate-dependent enzymes. Lipoyl-ACP can also act as a substrate although octanoyl-ACP is likely to be the physiological substrate. The sequence is that of Octanoyltransferase from Corynebacterium efficiens (strain DSM 44549 / YS-314 / AJ 12310 / JCM 11189 / NBRC 100395).